Reading from the N-terminus, the 470-residue chain is 6-phospho-beta-galactosidase 1 (470 aa).

Positions 23, 120, 163, 164, and 300 each coordinate D-galactose 6-phosphate. The Proton donor role is filled by glutamate 164. Residue glutamate 378 is the Nucleophile of the active site. D-galactose 6-phosphate-binding residues include serine 434, tryptophan 435, lysine 441, and tyrosine 443.

It belongs to the glycosyl hydrolase 1 family.

The enzyme catalyses a 6-phospho-beta-D-galactoside + H2O = D-galactose 6-phosphate + an alcohol. Its pathway is carbohydrate metabolism; lactose degradation; D-galactose 6-phosphate and beta-D-glucose from lactose 6-phosphate: step 1/1. In Streptococcus pneumoniae serotype 4 (strain ATCC BAA-334 / TIGR4), this protein is 6-phospho-beta-galactosidase 1.